We begin with the raw amino-acid sequence, 213 residues long: Uridine kinase (213 aa).

Glycine 15–serine 22 lines the ATP pocket.

Belongs to the uridine kinase family.

It is found in the cytoplasm. It catalyses the reaction uridine + ATP = UMP + ADP + H(+). The enzyme catalyses cytidine + ATP = CMP + ADP + H(+). Its pathway is pyrimidine metabolism; CTP biosynthesis via salvage pathway; CTP from cytidine: step 1/3. It participates in pyrimidine metabolism; UMP biosynthesis via salvage pathway; UMP from uridine: step 1/1. The chain is Uridine kinase from Escherichia fergusonii (strain ATCC 35469 / DSM 13698 / CCUG 18766 / IAM 14443 / JCM 21226 / LMG 7866 / NBRC 102419 / NCTC 12128 / CDC 0568-73).